The chain runs to 386 residues: Patatin-14 (386 aa).

An N-terminal signal peptide occupies residues 1 to 23 (MATTKSFLILFFMILATTSSTCA). Residues 32–229 (LSIDGGGIKG…TVGDPALLSL (198 aa)) form the PNPLA domain. Residues 36–41 (GGGIKG) carry the GXGXXG motif. Residues 75 to 79 (GTSTG) carry the GXSXG motif. Ser-77 serves as the catalytic Nucleophile. An N-linked (GlcNAc...) asparagine glycan is attached at Asn-115. Asp-215 functions as the Proton acceptor in the catalytic mechanism. The short motif at 215–217 (DGG) is the DGA/G element. A coiled-coil region spans residues 321-381 (ENALTGTTTE…LLSDRKKLRA (61 aa)).

This sequence belongs to the patatin family. Tuber.

Its subcellular location is the vacuole. Its function is as follows. Probable lipolytic acyl hydrolase (LAH), an activity which is thought to be involved in the response of tubers to pathogens. The polypeptide is Patatin-14 (Solanum tuberosum (Potato)).